The chain runs to 216 residues: Lipoprotein signal peptidase (216 aa).

The tract at residues 1 to 21 is disordered; the sequence is MATSRTAPTRAPSLRSSPALE. The next 3 helical transmembrane spans lie at 31–51, 89–109, and 114–134; these read VGAL…DQIT, GSTW…IWYA, and STAW…NLTD. Catalysis depends on residues aspartate 149 and aspartate 164. A helical membrane pass occupies residues 159–179; sequence IFNLADVAIVFSMGLFLLLTL. Residues 189–216 form a disordered region; it reads QRDEGAGVSSASPAGDESAADKPENLSA. The segment covering 207–216 has biased composition (basic and acidic residues); that stretch reads AADKPENLSA.

The protein belongs to the peptidase A8 family.

Its subcellular location is the cell membrane. It carries out the reaction Release of signal peptides from bacterial membrane prolipoproteins. Hydrolyzes -Xaa-Yaa-Zaa-|-(S,diacylglyceryl)Cys-, in which Xaa is hydrophobic (preferably Leu), and Yaa (Ala or Ser) and Zaa (Gly or Ala) have small, neutral side chains.. The protein operates within protein modification; lipoprotein biosynthesis (signal peptide cleavage). Its function is as follows. This protein specifically catalyzes the removal of signal peptides from prolipoproteins. The polypeptide is Lipoprotein signal peptidase (Leifsonia xyli subsp. xyli (strain CTCB07)).